The following is a 94-amino-acid chain: MSEILQDVQRKLVFPIDFPSQRKTEKFQQLSLMIGALVACILGFAQQSLKVLLTAYGISCVITLICVLPAYPWYNKQKLRWAQPKIEINVDQYD.

An N-acetylserine modification is found at Ser2. At 2–28 (SEILQDVQRKLVFPIDFPSQRKTEKFQ) the chain is on the cytoplasmic side. Residues 29–49 (QLSLMIGALVACILGFAQQSL) traverse the membrane as a helical segment. Position 50 (Lys50) is a topological domain, lumenal. The helical transmembrane segment at 51–71 (VLLTAYGISCVITLICVLPAY) threads the bilayer. Residues 72 to 94 (PWYNKQKLRWAQPKIEINVDQYD) lie on the Cytoplasmic side of the membrane.

This sequence belongs to the SPCS1 family. As to quaternary structure, component of the signal peptidase complex (SPC) composed of a catalytic subunit SEC11 and three accessory subunits SPC1, SPC2 and SPC3. The complex induces a local thinning of the ER membrane which is used to measure the length of the signal peptide (SP) h-region of protein substrates. This ensures the selectivity of the complex towards h-regions shorter than 18-20 amino acids. SPC associates with the translocon complex. Interacts with SBH1 and SEB2/SBH2.

The protein localises to the endoplasmic reticulum membrane. Functionally, component of the signal peptidase complex (SPC) which catalyzes the cleavage of N-terminal signal sequences from nascent proteins as they are translocated into the lumen of the endoplasmic reticulum. Dispensable for SPC enzymatic activity. This Saccharomyces cerevisiae (strain ATCC 204508 / S288c) (Baker's yeast) protein is Signal peptidase complex subunit 1 (SPC1).